We begin with the raw amino-acid sequence, 424 residues long: UPF0229 protein PC1_1960 (424 aa).

The interval 46 to 109 (IESGESVSIP…GQGDASKDGE (64 aa)) is disordered. Over residues 77–90 (PGNDHFVQNDKIER) the composition is skewed to basic and acidic residues. The segment covering 92-101 (QGGGGGGSGQ) has biased composition (gly residues).

It belongs to the UPF0229 family.

This Pectobacterium carotovorum subsp. carotovorum (strain PC1) protein is UPF0229 protein PC1_1960.